A 601-amino-acid polypeptide reads, in one-letter code: Aspartate--tRNA(Asp/Asn) ligase (601 aa).

Residue glutamate 173 coordinates L-aspartate. An aspartate region spans residues 197-200 (QLFK). Arginine 219 contributes to the L-aspartate binding site. Residues 219–221 (RDE) and glutamine 228 each bind ATP. Histidine 456 is an L-aspartate binding site. Residue glutamate 490 coordinates ATP. Arginine 497 serves as a coordination point for L-aspartate. 542-545 (GWDR) serves as a coordination point for ATP. A disordered region spans residues 566–601 (GGGYDPLTQAPAPITAEQRRESGVDAVPDDETAPQA). Acidic residues predominate over residues 592-601 (VPDDETAPQA).

Belongs to the class-II aminoacyl-tRNA synthetase family. Type 1 subfamily. In terms of assembly, homodimer.

The protein resides in the cytoplasm. It catalyses the reaction tRNA(Asx) + L-aspartate + ATP = L-aspartyl-tRNA(Asx) + AMP + diphosphate. In terms of biological role, aspartyl-tRNA synthetase with relaxed tRNA specificity since it is able to aspartylate not only its cognate tRNA(Asp) but also tRNA(Asn). Reaction proceeds in two steps: L-aspartate is first activated by ATP to form Asp-AMP and then transferred to the acceptor end of tRNA(Asp/Asn). In Beutenbergia cavernae (strain ATCC BAA-8 / DSM 12333 / CCUG 43141 / JCM 11478 / NBRC 16432 / NCIMB 13614 / HKI 0122), this protein is Aspartate--tRNA(Asp/Asn) ligase.